Reading from the N-terminus, the 322-residue chain is Alanine dehydrogenase (322 aa).

Lysine 65 acts as the Proton donor/acceptor in catalysis. Residues arginine 108, 135–136 (TQ), 157–159 (DVR), 217–219 (GAD), lysine 223, and serine 290 contribute to the NAD(+) site.

Belongs to the ornithine cyclodeaminase/mu-crystallin family. Archaeal alanine dehydrogenase subfamily. In terms of assembly, homodimer.

It catalyses the reaction L-alanine + NAD(+) + H2O = pyruvate + NH4(+) + NADH + H(+). In terms of biological role, catalyzes the NAD(+)-dependent oxidative deamination of L-alanine to pyruvate, and the reverse reaction, the reductive amination of pyruvate. Its physiological role is not known. Cannot use NADP(+) instead of NAD(+) as a cosubstrate. In the deamination direction, can also efficiently use L-2-aminobutyrate as substrate. In the reductive amination direction, also exhibits high activity with 2-oxobutyrate and oxaloacetate as substrate. In contrast to bacterial homologs, does not exhibit any ornithine cyclodeaminase activity. The polypeptide is Alanine dehydrogenase (Archaeoglobus fulgidus (strain ATCC 49558 / DSM 4304 / JCM 9628 / NBRC 100126 / VC-16)).